The following is a 324-amino-acid chain: tRNA U34 carboxymethyltransferase (324 aa).

Carboxy-S-adenosyl-L-methionine is bound by residues K91, W105, K110, G130, 152–154 (DPS), 181–182 (IE), M196, Y200, and R315.

The protein belongs to the class I-like SAM-binding methyltransferase superfamily. CmoB family. As to quaternary structure, homotetramer.

It carries out the reaction carboxy-S-adenosyl-L-methionine + 5-hydroxyuridine(34) in tRNA = 5-carboxymethoxyuridine(34) in tRNA + S-adenosyl-L-homocysteine + H(+). In terms of biological role, catalyzes carboxymethyl transfer from carboxy-S-adenosyl-L-methionine (Cx-SAM) to 5-hydroxyuridine (ho5U) to form 5-carboxymethoxyuridine (cmo5U) at position 34 in tRNAs. The sequence is that of tRNA U34 carboxymethyltransferase from Aliivibrio fischeri (strain MJ11) (Vibrio fischeri).